A 354-amino-acid polypeptide reads, in one-letter code: S-adenosylmethionine:tRNA ribosyltransferase-isomerase (354 aa).

This sequence belongs to the QueA family. As to quaternary structure, monomer.

The protein localises to the cytoplasm. The enzyme catalyses 7-aminomethyl-7-carbaguanosine(34) in tRNA + S-adenosyl-L-methionine = epoxyqueuosine(34) in tRNA + adenine + L-methionine + 2 H(+). It functions in the pathway tRNA modification; tRNA-queuosine biosynthesis. Its function is as follows. Transfers and isomerizes the ribose moiety from AdoMet to the 7-aminomethyl group of 7-deazaguanine (preQ1-tRNA) to give epoxyqueuosine (oQ-tRNA). This chain is S-adenosylmethionine:tRNA ribosyltransferase-isomerase, found in Methylobacterium radiotolerans (strain ATCC 27329 / DSM 1819 / JCM 2831 / NBRC 15690 / NCIMB 10815 / 0-1).